Reading from the N-terminus, the 187-residue chain is Resolvase OPG149 (187 aa).

This sequence belongs to the RuvC family. Poxviruses-type subfamily. Mg(2+) is required as a cofactor.

Plays a role in DNA replication by cleaving viral DNA concatamers to yield unit-length viral genomes. The concatamer junctions contain inverted repeat sequences that can be extruded as cruciforms, yielding Holliday junctions that A22 protein cleaves. The polypeptide is Resolvase OPG149 (OPG149) (Variola virus (isolate Human/India/Ind3/1967) (VARV)).